A 284-amino-acid polypeptide reads, in one-letter code: Deoxyribonuclease-1 (284 aa).

The N-terminal stretch at 1–22 (MRYTGLMGTLLTLVNLLQLAGT) is a signal peptide. Asn-40 carries N-linked (GlcNAc...) asparagine glycosylation. Residue Glu-100 is part of the active site. A disulfide bridge connects residues Cys-123 and Cys-126. The N-linked (GlcNAc...) asparagine glycan is linked to Asn-128. The active site involves His-156. Residues Cys-195 and Cys-231 are joined by a disulfide bond.

It belongs to the DNase I family. Ca(2+) is required as a cofactor. Requires Mg(2+) as cofactor. In terms of processing, N-glycosylated. Highly expressed in the parotid and submandibular gland as well as in the kidney and duodenum (at protein level). Expressed at intermediate level in the ileum, mesenterial lymph nodes, liver, ventral prostate, epididymis, ovary and stomach (at protein level). Expressed at low level in the sublingual, preputial, coagulation and pituitary gland (at protein level). Also present in the lachrymal and thyroid glands, striated muscle, intestine, the urinary bladder and the eye.

It is found in the secreted. It localises to the zymogen granule. The protein localises to the nucleus envelope. It carries out the reaction Endonucleolytic cleavage to 5'-phosphodinucleotide and 5'-phosphooligonucleotide end-products.. In terms of biological role, serum endocuclease secreted into body fluids by a wide variety of exocrine and endocrine organs. Expressed by non-hematopoietic tissues and preferentially cleaves protein-free DNA. Among other functions, seems to be involved in cell death by apoptosis. Binds specifically to G-actin and blocks actin polymerization. Together with DNASE1L3, plays a key role in degrading neutrophil extracellular traps (NETs). NETs are mainly composed of DNA fibers and are released by neutrophils to bind pathogens during inflammation. Degradation of intravascular NETs by DNASE1 and DNASE1L3 is required to prevent formation of clots that obstruct blood vessels and cause organ damage following inflammation. The sequence is that of Deoxyribonuclease-1 from Mus musculus (Mouse).